The primary structure comprises 852 residues: Envelope glycoprotein gp160 (852 aa).

The signal sequence occupies residues 1–31 (MRARETRKNYQCLWRWGTMLLGMLMICSAAE). Residues 32 to 680 (NLWVTVYYGV…ITNWLWYIRI (649 aa)) lie on the Extracellular side of the membrane. A disulfide bridge connects residues Cys53 and Cys73. N-linked (GlcNAc...) asparagine; by host glycosylation is found at Asn87, Asn129, Asn136, Asn141, Asn142, Asn155, Asn159, Asn189, and Asn198. 5 cysteine pairs are disulfide-bonded: Cys118–Cys206, Cys125–Cys197, Cys130–Cys156, Cys219–Cys248, and Cys229–Cys240. Positions 130–155 (CTDYLGNATNTNNSSGGTVEKEEIKN) are V1. The interval 156-197 (CSFNITTGIRDKVQKAYAYFYKLDVVPIDDDNTNTSYRLIHC) is V2. 5 N-linked (GlcNAc...) asparagine; by host glycosylation sites follow: Asn242, Asn263, Asn277, Asn290, and Asn296. The V3 stretch occupies residues 297-330 (CTRPNNNRRRRITSGPGKVLYTTGEIIGDIRKAY). Cys297 and Cys331 are oxidised to a cystine. Asn332, Asn339, and Asn355 each carry an N-linked (GlcNAc...) asparagine; by host glycan. A CD4-binding loop region spans residues 363–373 (SSGGDPEIVMH). 2 disulfides stabilise this stretch: Cys377/Cys439 and Cys384/Cys412. A V4 region spans residues 384–412 (CNTTKLFNSTWNENSTWNATGNDTITLPC). Residues Asn385, Asn391, Asn397, Asn401, Asn405, Asn442, and Asn457 are each glycosylated (N-linked (GlcNAc...) asparagine; by host). V5 stretches follow at residues 455–466 (DKNSTTEIFRPA) and 457–466 (NSTTEIFRPA). The interval 507–528 (AVGVIGAMFLGFLGAAGSTMGA) is fusion peptide. Residues 570–588 (KQLQARVLAVERYLRDQQL) form an immunosuppression region. Cys594 and Cys600 are disulfide-bonded. Asn607, Asn612, Asn621, and Asn633 each carry an N-linked (GlcNAc...) asparagine; by host glycan. Positions 629 to 663 (REIDNYTSLIYTLLEESQNQQEKNEQELLELDKWA) form a coiled coil. The tract at residues 658 to 679 (ELDKWASLWNWFSITNWLWYIR) is MPER; binding to GalCer. Residues 681–701 (FIMIVGGLIGLRIIFAVLSIV) traverse the membrane as a helical segment. Residues 702-852 (NRVRQGYSPL…IRQGFERALL (151 aa)) are Cytoplasmic-facing. The short motif at 708–711 (YSPL) is the YXXL motif; contains endocytosis signal element. The tract at residues 717–739 (IPAQRGPDRPEGIEEGGGERDRD) is disordered. Basic and acidic residues predominate over residues 722-739 (GPDRPEGIEEGGGERDRD). Cys760 carries the S-palmitoyl cysteine; by host lipid modification. Positions 851-852 (LL) match the Di-leucine internalization motif motif.

Belongs to the HIV-1 env protein family. The mature envelope protein (Env) consists of a homotrimer of non-covalently associated gp120-gp41 heterodimers. The resulting complex protrudes from the virus surface as a spike. There seems to be as few as 10 spikes on the average virion. Interacts with host CD4, CCR5 and CXCR4. Gp120 also interacts with the C-type lectins CD209/DC-SIGN and CLEC4M/DC-SIGNR (collectively referred to as DC-SIGN(R)). Gp120 and gp41 interact with GalCer. Gp120 interacts with host ITGA4/ITGB7 complex; on CD4+ T-cells, this interaction results in rapid activation of integrin ITGAL/LFA-1, which facilitates efficient cell-to-cell spreading of HIV-1. Gp120 interacts with cell-associated heparan sulfate; this interaction increases virus infectivity on permissive cells and may be involved in infection of CD4- cells. As to quaternary structure, the mature envelope protein (Env) consists of a homotrimer of non-covalently associated gp120-gp41 heterodimers. The resulting complex protrudes from the virus surface as a spike. There seems to be as few as 10 spikes on the average virion. In terms of processing, highly glycosylated by host. The high number of glycan on the protein is reffered to as 'glycan shield' because it contributes to hide protein sequence from adaptive immune system. Post-translationally, palmitoylation of the transmembrane protein and of Env polyprotein (prior to its proteolytic cleavage) is essential for their association with host cell membrane lipid rafts. Palmitoylation is therefore required for envelope trafficking to classical lipid rafts, but not for viral replication. Specific enzymatic cleavages in vivo yield mature proteins. Envelope glycoproteins are synthesized as an inactive precursor that is heavily N-glycosylated and processed likely by host cell furin in the Golgi to yield the mature SU and TM proteins. The cleavage site between SU and TM requires the minimal sequence [KR]-X-[KR]-R. About 2 of the 9 disulfide bonds of gp41 are reduced by P4HB/PDI, following binding to CD4 receptor.

It is found in the virion membrane. The protein localises to the host cell membrane. The protein resides in the host endosome membrane. Its function is as follows. Oligomerizes in the host endoplasmic reticulum into predominantly trimers. In a second time, gp160 transits in the host Golgi, where glycosylation is completed. The precursor is then proteolytically cleaved in the trans-Golgi and thereby activated by cellular furin or furin-like proteases to produce gp120 and gp41. Attaches the virus to the host lymphoid cell by binding to the primary receptor CD4. This interaction induces a structural rearrangement creating a high affinity binding site for a chemokine coreceptor like CXCR4 and/or CCR5. Acts as a ligand for CD209/DC-SIGN and CLEC4M/DC-SIGNR, which are respectively found on dendritic cells (DCs), and on endothelial cells of liver sinusoids and lymph node sinuses. These interactions allow capture of viral particles at mucosal surfaces by these cells and subsequent transmission to permissive cells. HIV subverts the migration properties of dendritic cells to gain access to CD4+ T-cells in lymph nodes. Virus transmission to permissive T-cells occurs either in trans (without DCs infection, through viral capture and transmission), or in cis (following DCs productive infection, through the usual CD4-gp120 interaction), thereby inducing a robust infection. In trans infection, bound virions remain infectious over days and it is proposed that they are not degraded, but protected in non-lysosomal acidic organelles within the DCs close to the cell membrane thus contributing to the viral infectious potential during DCs' migration from the periphery to the lymphoid tissues. On arrival at lymphoid tissues, intact virions recycle back to DCs' cell surface allowing virus transmission to CD4+ T-cells. In terms of biological role, acts as a class I viral fusion protein. Under the current model, the protein has at least 3 conformational states: pre-fusion native state, pre-hairpin intermediate state, and post-fusion hairpin state. During fusion of viral and target intracellular membranes, the coiled coil regions (heptad repeats) assume a trimer-of-hairpins structure, positioning the fusion peptide in close proximity to the C-terminal region of the ectodomain. The formation of this structure appears to drive apposition and subsequent fusion of viral and target cell membranes. Complete fusion occurs in host cell endosomes and is dynamin-dependent, however some lipid transfer might occur at the plasma membrane. The virus undergoes clathrin-dependent internalization long before endosomal fusion, thus minimizing the surface exposure of conserved viral epitopes during fusion and reducing the efficacy of inhibitors targeting these epitopes. Membranes fusion leads to delivery of the nucleocapsid into the cytoplasm. The chain is Envelope glycoprotein gp160 from Human immunodeficiency virus type 1 group M subtype B (isolate SF33) (HIV-1).